A 206-amino-acid polypeptide reads, in one-letter code: Small ribosomal subunit protein uS4 (206 aa).

One can recognise an S4 RNA-binding domain in the interval 96-156; the sequence is GRLDNVVYRM…EKSKNQLRIQ (61 aa).

This sequence belongs to the universal ribosomal protein uS4 family. Part of the 30S ribosomal subunit. Contacts protein S5. The interaction surface between S4 and S5 is involved in control of translational fidelity.

In terms of biological role, one of the primary rRNA binding proteins, it binds directly to 16S rRNA where it nucleates assembly of the body of the 30S subunit. Its function is as follows. With S5 and S12 plays an important role in translational accuracy. This chain is Small ribosomal subunit protein uS4, found in Saccharophagus degradans (strain 2-40 / ATCC 43961 / DSM 17024).